We begin with the raw amino-acid sequence, 607 residues long: LRR receptor kinase SERK2 (607 aa).

The N-terminal stretch at 1–21 is a signal peptide; it reads MRELRVAVLIIAVSLPSFSAS. At 22–219 the chain is on the extracellular side; sequence DRQGDALYDM…QSGSHSSKIG (198 aa). Residues N36 and N110 are each glycosylated (N-linked (GlcNAc...) asparagine). LRR repeat units follow at residues 87–110, 111–135, 136–159, and 160–183; these read LKYL…QFGN, LSSL…LGQL, SKLQ…LAKI, and SSLT…LFQV. N-linked (GlcNAc...) asparagine glycosylation is found at N149, N171, N187, and N206. A helical membrane pass occupies residues 220–240; the sequence is IVLGTVGGVIGLLIVAALFLF. The Cytoplasmic portion of the chain corresponds to 241 to 607; it reads CKGRRKSHLR…QEAIELSGGR (367 aa). The 280-residue stretch at 284–563 folds into the Protein kinase domain; it reads FSERNVLGQG…VVRMLEGEGL (280 aa). ATP-binding positions include 290 to 298 and K312; that span reads LGQGGFGKV. The Proton acceptor role is filled by D411.

It belongs to the protein kinase superfamily. Ser/Thr protein kinase family.

The protein localises to the cell membrane. It catalyses the reaction L-seryl-[protein] + ATP = O-phospho-L-seryl-[protein] + ADP + H(+). The enzyme catalyses L-threonyl-[protein] + ATP = O-phospho-L-threonyl-[protein] + ADP + H(+). In terms of biological role, may be involved in the regulation of plant growth through the brassinosteroid (BR) signaling pathway. This chain is LRR receptor kinase SERK2, found in Oryza sativa subsp. japonica (Rice).